The primary structure comprises 329 residues: Calponin-3 (329 aa).

N6-acetyllysine is present on lysine 23. The Calponin-homology (CH) domain maps to 26–130 (HQAEEDLRNW…TLVALAGLAK (105 aa)). Lysine 158 carries the post-translational modification N6-methyllysine. 3 Calponin-like repeats span residues 164–189 (IGLQMGTNKCASQAGMTAYGTRRHLY), 204–229 (ISLQMGTNKGASQAGMLAPGTRRDIY), and 243–268 (ISLQMGTNKVASQKGMSVYGLGRQVY). The tract at residues 280-329 (VIHNGSQGTGTNGSEISDSDYQAEYPDEYHGEYQDDYPRDYQYGDQGIDY) is disordered. Positions 306–318 (DEYHGEYQDDYPR) are enriched in basic and acidic residues.

Belongs to the calponin family.

Thin filament-associated protein that is implicated in the regulation and modulation of smooth muscle contraction. It is capable of binding to actin, calmodulin and tropomyosin. The interaction of calponin with actin inhibits the actomyosin Mg-ATPase activity. The protein is Calponin-3 (CNN3) of Bos taurus (Bovine).